We begin with the raw amino-acid sequence, 305 residues long: Tyrosine recombinase XerC (305 aa).

One can recognise a Core-binding (CB) domain in the interval 4–95; sequence TQIQELIIKW…AIKNFYKFLE (92 aa). The region spanning 116 to 298 is the Tyr recombinase domain; the sequence is LLPKALSEEE…SIKHLETAYV (183 aa). Catalysis depends on residues Arg159, Lys182, His250, Arg253, and His276. Tyr285 (O-(3'-phospho-DNA)-tyrosine intermediate) is an active-site residue.

This sequence belongs to the 'phage' integrase family. XerC subfamily. As to quaternary structure, forms a cyclic heterotetrameric complex composed of two molecules of XerC and two molecules of XerD.

It localises to the cytoplasm. Functionally, site-specific tyrosine recombinase, which acts by catalyzing the cutting and rejoining of the recombining DNA molecules. The XerC-XerD complex is essential to convert dimers of the bacterial chromosome into monomers to permit their segregation at cell division. It also contributes to the segregational stability of plasmids. This chain is Tyrosine recombinase XerC, found in Rickettsia bellii (strain RML369-C).